The chain runs to 106 residues: Large ribosomal subunit protein uL24 (106 aa).

Belongs to the universal ribosomal protein uL24 family. Part of the 50S ribosomal subunit.

Functionally, one of two assembly initiator proteins, it binds directly to the 5'-end of the 23S rRNA, where it nucleates assembly of the 50S subunit. Its function is as follows. One of the proteins that surrounds the polypeptide exit tunnel on the outside of the subunit. The chain is Large ribosomal subunit protein uL24 from Delftia acidovorans (strain DSM 14801 / SPH-1).